The chain runs to 76 residues: Probable 26S proteasome complex subunit dss-1 (76 aa).

2 disordered regions span residues Met1–Phe28 and Asp52–Ala76. 2 stretches are compositionally biased toward basic and acidic residues: residues Thr7–Thr20 and Glu57–Lys70.

The protein belongs to the DSS1/SEM1 family. As to quaternary structure, part of the 26S proteasome.

Its subcellular location is the nucleus. It localises to the cytoplasm. Functionally, subunit of the 26S proteasome which plays a role in ubiquitin-dependent proteolysis. Has an essential role in oogenesis and larval growth. Required for intestinal function and default lifespan. The protein is Probable 26S proteasome complex subunit dss-1 of Caenorhabditis briggsae.